The sequence spans 252 residues: Phosphoglycolate phosphatase (252 aa).

Aspartate 13 functions as the Nucleophile in the catalytic mechanism. Mg(2+)-binding residues include aspartate 13, aspartate 15, and aspartate 192.

The protein belongs to the HAD-like hydrolase superfamily. CbbY/CbbZ/Gph/YieH family. In terms of assembly, monomer. Requires Mg(2+) as cofactor. The cofactor is chloride.

It catalyses the reaction 2-phosphoglycolate + H2O = glycolate + phosphate. It functions in the pathway organic acid metabolism; glycolate biosynthesis; glycolate from 2-phosphoglycolate: step 1/1. Specifically catalyzes the dephosphorylation of 2-phosphoglycolate. Is involved in the dissimilation of the intracellular 2-phosphoglycolate formed during the DNA repair of 3'-phosphoglycolate ends, a major class of DNA lesions induced by oxidative stress. The chain is Phosphoglycolate phosphatase from Salmonella typhi.